The following is a 385-amino-acid chain: Guanine nucleotide-binding protein alpha-5 subunit (385 aa).

Glycine 2 carries the N-myristoyl glycine lipid modification. The S-palmitoyl cysteine moiety is linked to residue cysteine 6. The region spanning 32–385 (RKIKMLLLGI…NKNIETLSLE (354 aa)) is the G-alpha domain. The segment at 35 to 48 (KMLLLGISDSGKST) is G1 motif. Residues 40 to 47 (GISDSGKS), 174 to 180 (IHMRQTT), 199 to 203 (DVGGQ), 298 to 301 (NKID), and alanine 357 contribute to the GTP site. Residues serine 47 and threonine 180 each contribute to the Mg(2+) site. Positions 172–180 (DLIHMRQTT) are G2 motif. Residues 195-204 (IRLIDVGGQK) are G3 motif. Positions 294–301 (MLFLNKID) are G4 motif. The interval 355–360 (TQATIT) is G5 motif.

This sequence belongs to the G-alpha family. In terms of assembly, g proteins are composed of 3 units; alpha, beta and gamma. The alpha chain contains the guanine nucleotide binding site.

Functionally, guanine nucleotide-binding proteins (G proteins) are involved as modulators or transducers in various transmembrane signaling systems. The protein is Guanine nucleotide-binding protein alpha-5 subunit (gpa-5) of Caenorhabditis briggsae.